Consider the following 880-residue polypeptide: Protein translocase subunit SecA (880 aa).

ATP contacts are provided by residues glutamine 86, 104–108 (GEGKT), and aspartate 511. The interval 837 to 871 (AQKIQRSDGDGARRPVEKPKKIGRNDPCPCGSGKK) is disordered. Residues 841–860 (QRSDGDGARRPVEKPKKIGR) show a composition bias toward basic and acidic residues. Residues cysteine 864, cysteine 866, cysteine 875, and cysteine 876 each coordinate Zn(2+).

The protein belongs to the SecA family. Monomer and homodimer. Part of the essential Sec protein translocation apparatus which comprises SecA, SecYEG and auxiliary proteins SecDF. Other proteins may also be involved. The cofactor is Zn(2+).

Its subcellular location is the cell inner membrane. It localises to the cytoplasm. The enzyme catalyses ATP + H2O + cellular proteinSide 1 = ADP + phosphate + cellular proteinSide 2.. Functionally, part of the Sec protein translocase complex. Interacts with the SecYEG preprotein conducting channel. Has a central role in coupling the hydrolysis of ATP to the transfer of proteins into and across the cell membrane, serving as an ATP-driven molecular motor driving the stepwise translocation of polypeptide chains across the membrane. The protein is Protein translocase subunit SecA of Thermodesulfovibrio yellowstonii (strain ATCC 51303 / DSM 11347 / YP87).